The chain runs to 59 residues: DNA gyrase inhibitor YacG (59 aa).

Zn(2+) is bound by residues Cys7, Cys10, Cys25, and Cys29.

The protein belongs to the DNA gyrase inhibitor YacG family. Interacts with GyrB. Zn(2+) is required as a cofactor.

Functionally, inhibits all the catalytic activities of DNA gyrase by preventing its interaction with DNA. Acts by binding directly to the C-terminal domain of GyrB, which probably disrupts DNA binding by the gyrase. The sequence is that of DNA gyrase inhibitor YacG from Geobacter sulfurreducens (strain ATCC 51573 / DSM 12127 / PCA).